The primary structure comprises 226 residues: MTVQKLVATAVLVALVSLILNNAAAFTPNWVYQTLEDGRKRSVGLWKSCWLVDRGKGGTSPGTRTGQVDTHDCEVLGWGSESAGFQESRGTVKLQFDMMRACNLVATAALAVGQITFILGLTGLPLMSPESQCWEEAMAAAFQLASFVLVIGLVTFYRIGPYTNLSWSCYLNIGACLLATLAAAMLIWNILHRREDCMAPRVIVISRSLTARFRRGLDNDYVESPC.

Over 1 to 5 the chain is Cytoplasmic; the sequence is MTVQK. A helical membrane pass occupies residues 6–26; the sequence is LVATAVLVALVSLILNNAAAF. Topologically, residues 27-103 are extracellular; the sequence is TPNWVYQTLE…LQFDMMRACN (77 aa). A helical transmembrane segment spans residues 104–124; it reads LVATAALAVGQITFILGLTGL. Residues 125–136 lie on the Cytoplasmic side of the membrane; the sequence is PLMSPESQCWEE. A helical membrane pass occupies residues 137 to 157; sequence AMAAAFQLASFVLVIGLVTFY. The Extracellular portion of the chain corresponds to 158 to 170; the sequence is RIGPYTNLSWSCY. The N-linked (GlcNAc...) asparagine glycan is linked to N164. Residues 171-191 form a helical membrane-spanning segment; the sequence is LNIGACLLATLAAAMLIWNIL. Residues 192 to 226 are Cytoplasmic-facing; sequence HRREDCMAPRVIVISRSLTARFRRGLDNDYVESPC.

The protein localises to the cell junction. It is found in the adherens junction. The protein resides in the cell membrane. In terms of biological role, can influence paracellular permeability. Appears to be involved in cell-cell interactions through adherens. This Rattus norvegicus (Rat) protein is Transmembrane protein 204 (Tmem204).